Here is a 124-residue protein sequence, read N- to C-terminus: UPF0738 protein GWCH70_0774 (124 aa).

The protein belongs to the UPF0738 family.

The sequence is that of UPF0738 protein GWCH70_0774 from Geobacillus sp. (strain WCH70).